A 972-amino-acid polypeptide reads, in one-letter code: POM121-like protein 2 (972 aa).

Disordered regions lie at residues 1 to 67 (MGSY…PANP), 281 to 302 (LKKA…SGQL), 328 to 359 (TEED…IPEM), 406 to 431 (GISS…PVTD), 676 to 726 (LGLS…AIDG), and 953 to 972 (SKTL…TYKK). Basic residues predominate over residues 40-57 (RVQHVHRAQPARRHRPAR). Composition is skewed to polar residues over residues 287-302 (SPNS…SGQL) and 339-352 (VPSN…TGTA). The segment covering 413–431 (PSIASTQASPSSPTTPVTD) has biased composition (low complexity). Positions 677–696 (GLSSTNQPPVTSSNSNVTSA) are enriched in polar residues. Residues 697 to 706 (LTSSLGSSPK) are compositionally biased toward low complexity.

Belongs to the POM121 family.

The polypeptide is POM121-like protein 2 (Pom121l2) (Mus musculus (Mouse)).